Reading from the N-terminus, the 276-residue chain is Expansin-A25 (276 aa).

The N-terminal stretch at 1–27 (MKLLEQMVYVECFMIIMATLLVSMSYG) is a signal peptide. The Expansin-like EG45 domain occupies 73–183 (QGACGYGDLF…RRISCARTGG (111 aa)). The Expansin-like CBD domain maps to 193–272 (YFLMILPYNV…NWGFGQTFDG (80 aa)).

The protein belongs to the expansin family. Expansin A subfamily.

The protein resides in the secreted. The protein localises to the cell wall. Its subcellular location is the membrane. Functionally, causes loosening and extension of plant cell walls by disrupting non-covalent bonding between cellulose microfibrils and matrix glucans. No enzymatic activity has been found. This is Expansin-A25 (EXPA25) from Arabidopsis thaliana (Mouse-ear cress).